The following is a 147-amino-acid chain: Large ribosomal subunit protein bL9 (147 aa).

This sequence belongs to the bacterial ribosomal protein bL9 family.

Its function is as follows. Binds to the 23S rRNA. This is Large ribosomal subunit protein bL9 from Trichlorobacter lovleyi (strain ATCC BAA-1151 / DSM 17278 / SZ) (Geobacter lovleyi).